The chain runs to 182 residues: T-cell surface glycoprotein CD3 gamma chain (182 aa).

The signal sequence occupies residues 1 to 22 (MEQGKGLAGLFLVISLLQGTMA). The Extracellular segment spans residues 23–116 (QQKEEKHLVK…CIELNMGTVS (94 aa)). The Ig-like domain maps to 37–94 (QGDGSVLLTCDFNEKTITWLKDGHRISPPNATKSTWNLGNGAKDPRGMYQCRGAKKKS). Cysteine 46 and cysteine 87 are joined by a disulfide. An N-linked (GlcNAc...) asparagine glycan is attached at asparagine 66. A helical membrane pass occupies residues 117–137 (GFIFAEIISIFFLAVGVYFIA). Residues 138-182 (GQDGVRQSRASDKQTLLQNEQVYQPLKDREYEQYSRLQGNQVRKK) are Cytoplasmic-facing. Phosphoserine is present on serine 145. At serine 148 the chain carries Phosphoserine; by PKC. Positions 149 to 177 (DKQTLLQNEQVYQPLKDREYEQYSRLQGN) constitute an ITAM domain. The Di-leucine motif motif lies at 153-154 (LL).

In terms of assembly, the TCR-CD3 complex is composed of a CD3D/CD3E and a CD3G/CD3E heterodimers that preferentially associate with TCRalpha and TCRbeta, respectively, to form TCRalpha/CD3E/CD3G and TCRbeta/CD3G/CD3E trimers. In turn, the hexamer interacts with CD3Z homodimer to form the TCR-CD3 complex. Alternatively, TCRalpha and TCRbeta can be replaced by TCRgamma and TCRdelta. Post-translationally, phosphorylated on Tyr residues after T-cell receptor triggering by LCK in association with CD4/CD8. Phosphorylated also by PKC; leading to the TCR complex down-regulation. Phosphorylated on Tyr residues after T-cell receptor triggering by LCK in association with CD4/CD8.

It is found in the cell membrane. Functionally, part of the TCR-CD3 complex present on T-lymphocyte cell surface that plays an essential role in adaptive immune response. When antigen presenting cells (APCs) activate T-cell receptor (TCR), TCR-mediated signals are transmitted across the cell membrane by the CD3 chains CD3D, CD3E, CD3G and CD3Z. All CD3 chains contain immunoreceptor tyrosine-based activation motifs (ITAMs) in their cytoplasmic domain. Upon TCR engagement, these motifs become phosphorylated by Src family protein tyrosine kinases LCK and FYN, resulting in the activation of downstream signaling pathways. In addition to this role of signal transduction in T-cell activation, CD3G plays an essential role in the dynamic regulation of TCR expression at the cell surface. Indeed, constitutive TCR cycling is dependent on the di-leucine-based (diL) receptor-sorting motif present in CD3G. The chain is T-cell surface glycoprotein CD3 gamma chain (Cd3g) from Rattus norvegicus (Rat).